Consider the following 235-residue polypeptide: Phosphoribosylaminoimidazole-succinocarboxamide synthase (235 aa).

The protein belongs to the SAICAR synthetase family.

The catalysed reaction is 5-amino-1-(5-phospho-D-ribosyl)imidazole-4-carboxylate + L-aspartate + ATP = (2S)-2-[5-amino-1-(5-phospho-beta-D-ribosyl)imidazole-4-carboxamido]succinate + ADP + phosphate + 2 H(+). It participates in purine metabolism; IMP biosynthesis via de novo pathway; 5-amino-1-(5-phospho-D-ribosyl)imidazole-4-carboxamide from 5-amino-1-(5-phospho-D-ribosyl)imidazole-4-carboxylate: step 1/2. The chain is Phosphoribosylaminoimidazole-succinocarboxamide synthase (purC) from Streptococcus pneumoniae serotype 4 (strain ATCC BAA-334 / TIGR4).